Here is a 540-residue protein sequence, read N- to C-terminus: CUB domain-containing protein 2 (540 aa).

A signal peptide spans 1–22 (MLAEWGACLLLAVALLGPGLQA). The Extracellular portion of the chain corresponds to 23-516 (QAMEGVKCGG…VSMVAQDTSD (494 aa)). 6 disulfides stabilise this stretch: Cys30-Cys56, Cys83-Cys106, Cys145-Cys171, Cys198-Cys218, Cys257-Cys283, and Cys314-Cys336. 3 CUB domains span residues 30–143 (CGGV…YQKD), 145–255 (CGGV…YFSG), and 257–373 (CQEV…YIGV). Residue Asn40 is glycosylated (N-linked (GlcNAc...) asparagine). Asn267 is a glycosylation site (N-linked (GlcNAc...) asparagine). 3 N-linked (GlcNAc...) asparagine glycosylation sites follow: Asn377, Asn435, and Asn436. A helical transmembrane segment spans residues 517–537 (IVFLGLCILAGILMVIAIVVL). The Cytoplasmic segment spans residues 538 to 540 (MLL).

It is found in the membrane. In Homo sapiens (Human), this protein is CUB domain-containing protein 2 (CDCP2).